Reading from the N-terminus, the 265-residue chain is uncharacterized protein (265 aa).

Residues 233-265 are disordered; the sequence is STACGSDQRPTRLPRASCSSRSISGSAARPWKR. Over residues 247 to 265 the composition is skewed to low complexity; the sequence is RASCSSRSISGSAARPWKR.

This is an uncharacterized protein from Escherichia coli.